Reading from the N-terminus, the 280-residue chain is uncharacterized protein (280 aa).

Residues 26–127 (YFMSMKLLDV…TRVSILMRYY (102 aa)) form the KilA-N domain.

This is an uncharacterized protein from Vertebrata (FPV).